The following is a 722-amino-acid chain: D-(-)-3-hydroxybutyrate oligomer hydrolase (722 aa).

Polar residues predominate over residues 1–11 (MQQRHLSQSAH). The interval 1-20 (MQQRHLSQSAHSHGHGTRRA) is disordered. Positions 1–36 (MQQRHLSQSAHSHGHGTRRAHRRNTIAIAVATLAVA) are cleaved as a signal peptide. Residue serine 327 is the Charge relay system of the active site. Residues 671–697 (PPSQVVRTTPRGGADTDTVGPRIQPSN) form a disordered region.

Belongs to the D-(-)-3-hydroxybutyrate oligomer hydrolase family.

It is found in the secreted. It carries out the reaction (3R)-hydroxybutanoate dimer + H2O = 2 (R)-3-hydroxybutanoate + H(+). Its pathway is lipid metabolism; butanoate metabolism. Participates in the degradation of poly-3-hydroxybutyrate (PHB). It works downstream of poly(3-hydroxybutyrate) depolymerase, hydrolyzing D(-)-3-hydroxybutyrate oligomers of various length (3HB-oligomers) into 3HB-monomers. In Cupriavidus metallidurans (strain ATCC 43123 / DSM 2839 / NBRC 102507 / CH34) (Ralstonia metallidurans), this protein is D-(-)-3-hydroxybutyrate oligomer hydrolase.